A 160-amino-acid polypeptide reads, in one-letter code: Cytochrome b6-f complex subunit 4 (160 aa).

Transmembrane regions (helical) follow at residues leucine 36–isoleucine 56, leucine 95–glutamate 115, and threonine 131–isoleucine 151.

The protein belongs to the cytochrome b family. PetD subfamily. The 4 large subunits of the cytochrome b6-f complex are cytochrome b6, subunit IV (17 kDa polypeptide, petD), cytochrome f and the Rieske protein, while the 4 small subunits are petG, petL, petM and petN. The complex functions as a dimer.

Its subcellular location is the plastid. The protein localises to the chloroplast thylakoid membrane. Functionally, component of the cytochrome b6-f complex, which mediates electron transfer between photosystem II (PSII) and photosystem I (PSI), cyclic electron flow around PSI, and state transitions. In Acorus calamus (Sweet flag), this protein is Cytochrome b6-f complex subunit 4.